Consider the following 438-residue polypeptide: Anaerobic glycerol-3-phosphate dehydrogenase subunit B (438 aa).

It belongs to the anaerobic G-3-P dehydrogenase subunit B family. Composed of a catalytic GlpA/B dimer and of membrane bound GlpC. FMN is required as a cofactor.

It carries out the reaction a quinone + sn-glycerol 3-phosphate = dihydroxyacetone phosphate + a quinol. The protein operates within polyol metabolism; glycerol degradation via glycerol kinase pathway; glycerone phosphate from sn-glycerol 3-phosphate (anaerobic route): step 1/1. Conversion of glycerol 3-phosphate to dihydroxyacetone. Uses fumarate or nitrate as electron acceptor. This chain is Anaerobic glycerol-3-phosphate dehydrogenase subunit B, found in Vibrio vulnificus (strain CMCP6).